We begin with the raw amino-acid sequence, 463 residues long: Asparagine--tRNA ligase (463 aa).

It belongs to the class-II aminoacyl-tRNA synthetase family. In terms of assembly, homodimer.

The protein localises to the cytoplasm. The enzyme catalyses tRNA(Asn) + L-asparagine + ATP = L-asparaginyl-tRNA(Asn) + AMP + diphosphate + H(+). In Bacillus cytotoxicus (strain DSM 22905 / CIP 110041 / 391-98 / NVH 391-98), this protein is Asparagine--tRNA ligase.